Reading from the N-terminus, the 155-residue chain is Putative pre-16S rRNA nuclease (155 aa).

This sequence belongs to the YqgF nuclease family.

Its subcellular location is the cytoplasm. Could be a nuclease involved in processing of the 5'-end of pre-16S rRNA. In Xylella fastidiosa (strain M23), this protein is Putative pre-16S rRNA nuclease.